Reading from the N-terminus, the 638-residue chain is 1-deoxy-D-xylulose-5-phosphate synthase (638 aa).

Thiamine diphosphate-binding positions include His-74 and 115 to 117 (GHS). Asp-146 contacts Mg(2+). Thiamine diphosphate contacts are provided by residues 147–148 (GA), Asn-175, Tyr-286, and Glu-366. Residue Asn-175 participates in Mg(2+) binding.

The protein belongs to the transketolase family. DXPS subfamily. Homodimer. It depends on Mg(2+) as a cofactor. The cofactor is thiamine diphosphate.

It catalyses the reaction D-glyceraldehyde 3-phosphate + pyruvate + H(+) = 1-deoxy-D-xylulose 5-phosphate + CO2. It participates in metabolic intermediate biosynthesis; 1-deoxy-D-xylulose 5-phosphate biosynthesis; 1-deoxy-D-xylulose 5-phosphate from D-glyceraldehyde 3-phosphate and pyruvate: step 1/1. Catalyzes the acyloin condensation reaction between C atoms 2 and 3 of pyruvate and glyceraldehyde 3-phosphate to yield 1-deoxy-D-xylulose-5-phosphate (DXP). The chain is 1-deoxy-D-xylulose-5-phosphate synthase from Syntrophomonas wolfei subsp. wolfei (strain DSM 2245B / Goettingen).